We begin with the raw amino-acid sequence, 501 residues long: Cytochrome P450 2S1 (501 aa).

Cysteine 441 is a binding site for heme.

Belongs to the cytochrome P450 family. It depends on heme as a cofactor.

Its subcellular location is the endoplasmic reticulum membrane. It localises to the microsome membrane. It catalyses the reaction all-trans-retinoate + reduced [NADPH--hemoprotein reductase] + O2 = all-trans-5,6-epoxyretinoate + oxidized [NADPH--hemoprotein reductase] + H2O + H(+). The enzyme catalyses all-trans-retinoate + reduced [NADPH--hemoprotein reductase] + O2 = all-trans-4-hydroxyretinoate + oxidized [NADPH--hemoprotein reductase] + H2O + H(+). It carries out the reaction (5S)-hydroperoxy-(6E,8Z,11Z,14Z)-eicosatetraenoate = 5-oxo-(6E,8Z,11Z,14Z)-eicosatetraenoate + H2O. The catalysed reaction is (12S)-hydroperoxy-(5Z,8Z,10E,14Z)-eicosatetraenoate = 12-oxo-(5Z,8Z,10E,14Z)-eicosatetraenoate + H2O. It catalyses the reaction (15S)-hydroperoxy-(5Z,8Z,11Z,13E)-eicosatetraenoate = 15-oxo-(5Z,8Z,11Z,13E)-eicosatetraenoate + H2O. The enzyme catalyses prostaglandin H2 = thromboxane A2. It carries out the reaction prostaglandin H2 = (12S)-hydroxy-(5Z,8E,10E)-heptadecatrienoate + malonaldehyde. The catalysed reaction is (13S)-hydroperoxy-(9Z,11E)-octadecadienoate = 13-oxo-(9Z,11E)-octadecadienoate + H2O. It functions in the pathway lipid metabolism; fatty acid metabolism. Its function is as follows. A cytochrome P450 monooxygenase involved in the metabolism of retinoids and eicosanoids. In epidermis, may contribute to the oxidative metabolism of all-trans-retinoic acid. For this activity, uses molecular oxygen inserting one oxygen atom into a substrate, and reducing the second into a water molecule, with two electrons provided by NADPH via cytochrome P450 reductase (NADPH--hemoprotein reductase). Additionally, displays peroxidase and isomerase activities toward various oxygenated eicosanoids such as prostaglandin H2 (PGH2) and hydroperoxyeicosatetraenoates (HPETEs). Independently of cytochrome P450 reductase, NADPH, and O2, catalyzes the breakdown of PGH2 to hydroxyheptadecatrienoic acid (HHT) and malondialdehyde (MDA), which is known to act as a mediator of DNA damage. The protein is Cytochrome P450 2S1 (Cyp2s1) of Mus musculus (Mouse).